Here is a 269-residue protein sequence, read N- to C-terminus: Formamidopyrimidine-DNA glycosylase (269 aa).

Proline 2 functions as the Schiff-base intermediate with DNA in the catalytic mechanism. Glutamate 3 serves as the catalytic Proton donor. Residue lysine 57 is the Proton donor; for beta-elimination activity of the active site. Positions 90, 109, and 150 each coordinate DNA. The FPG-type zinc finger occupies 235–269; sequence QVYGRKGEPCRVCGTPIAATKHAQRATFYCRHCQK. Arginine 259 acts as the Proton donor; for delta-elimination activity in catalysis.

This sequence belongs to the FPG family. As to quaternary structure, monomer. Zn(2+) serves as cofactor.

The enzyme catalyses Hydrolysis of DNA containing ring-opened 7-methylguanine residues, releasing 2,6-diamino-4-hydroxy-5-(N-methyl)formamidopyrimidine.. It carries out the reaction 2'-deoxyribonucleotide-(2'-deoxyribose 5'-phosphate)-2'-deoxyribonucleotide-DNA = a 3'-end 2'-deoxyribonucleotide-(2,3-dehydro-2,3-deoxyribose 5'-phosphate)-DNA + a 5'-end 5'-phospho-2'-deoxyribonucleoside-DNA + H(+). Involved in base excision repair of DNA damaged by oxidation or by mutagenic agents. Acts as a DNA glycosylase that recognizes and removes damaged bases. Has a preference for oxidized purines, such as 7,8-dihydro-8-oxoguanine (8-oxoG). Has AP (apurinic/apyrimidinic) lyase activity and introduces nicks in the DNA strand. Cleaves the DNA backbone by beta-delta elimination to generate a single-strand break at the site of the removed base with both 3'- and 5'-phosphates. The polypeptide is Formamidopyrimidine-DNA glycosylase (Salmonella paratyphi B (strain ATCC BAA-1250 / SPB7)).